Consider the following 209-residue polypeptide: UPF0174 protein HP_1587 (209 aa).

This sequence belongs to the UPF0174 family.

The polypeptide is UPF0174 protein HP_1587 (Helicobacter pylori (strain ATCC 700392 / 26695) (Campylobacter pylori)).